We begin with the raw amino-acid sequence, 516 residues long: Flagellar radial spoke protein 3 (516 aa).

Composition is skewed to polar residues over residues 1–11 (MVQAKAQQQLY) and 62–74 (ATQT…SPAS). Disordered regions lie at residues 1-32 (MVQA…EDET), 60-90 (ADAT…TPEA), 388-412 (NAKW…AAEE), and 424-447 (AAAE…DGVE). A compositionally biased stretch (basic and acidic residues) spans 391-412 (WEADKAEAAEKARAEAEAAAEE).

Belongs to the flagellar radial spoke RSP3 family. As to quaternary structure, interacts with FAP91. Post-translationally, protein 3 is one of the 5 radial spoke proteins that are phosphorylated. Protein 3a might only differ from protein 3 in being unphosphorylated.

It localises to the cytoplasm. Its subcellular location is the cytoskeleton. The protein resides in the flagellum axoneme. Protein 3 may attach the radial spoke to the outer doublet microtubule or is required to form a stable spoke structure. Functionally, flagellar radial spokes contribute to the regulation of dynein arm activity and thus the pattern of flagellar bending. They consist of a thin stalk, which is attached to the a subfiber of the outer doublet microtubule, and a bulbous head, which is attached to the stalk and appears to interact with the projections from the central pair of microtubules. The polypeptide is Flagellar radial spoke protein 3 (Chlamydomonas reinhardtii (Chlamydomonas smithii)).